The primary structure comprises 144 residues: Large ribosomal subunit protein uL15 (144 aa).

The disordered stretch occupies residues 1–52; it reads MRLNSLSPAEGAKHSAKRLGRGISSGLGKTGGRGHKGQKSRTGGGVRRGFEG.

It belongs to the universal ribosomal protein uL15 family. Part of the 50S ribosomal subunit.

Binds to the 23S rRNA. This Actinobacillus pleuropneumoniae serotype 7 (strain AP76) protein is Large ribosomal subunit protein uL15.